Here is a 322-residue protein sequence, read N- to C-terminus: ATP-dependent 6-phosphofructokinase (322 aa).

Residues glycine 12, 73–74 (RF), and 103–106 (GDGT) each bind ATP. Mg(2+) is bound at residue aspartate 104. Residue 126 to 128 (TID) participates in substrate binding. Aspartate 128 functions as the Proton acceptor in the catalytic mechanism. Arginine 155 contributes to the ADP binding site. Substrate is bound by residues arginine 163 and 170 to 172 (MGR). ADP-binding positions include 186–188 (GSE), lysine 212, and 214–216 (KPS). Substrate contacts are provided by residues glutamate 223, arginine 245, and 251–254 (HTQR).

The protein belongs to the phosphofructokinase type A (PFKA) family. ATP-dependent PFK group I subfamily. Prokaryotic clade 'B1' sub-subfamily. Homotetramer. Requires Mg(2+) as cofactor.

It is found in the cytoplasm. It carries out the reaction beta-D-fructose 6-phosphate + ATP = beta-D-fructose 1,6-bisphosphate + ADP + H(+). It participates in carbohydrate degradation; glycolysis; D-glyceraldehyde 3-phosphate and glycerone phosphate from D-glucose: step 3/4. Allosterically activated by ADP and other diphosphonucleosides, and allosterically inhibited by phosphoenolpyruvate. Its function is as follows. Catalyzes the phosphorylation of D-fructose 6-phosphate to fructose 1,6-bisphosphate by ATP, the first committing step of glycolysis. In Mesomycoplasma hyopneumoniae (strain J / ATCC 25934 / NCTC 10110) (Mycoplasma hyopneumoniae), this protein is ATP-dependent 6-phosphofructokinase.